The primary structure comprises 28 residues: Ranatuerin-2SEc (28 aa).

A disulfide bridge connects residues C23 and C28.

In terms of tissue distribution, expressed by the skin glands.

It localises to the secreted. In terms of biological role, mast cell degranulating peptide. Causes histamine release from rat peritoneal mast cells in vitro. Has antibacterial activity against the Gram-negative bacterium E.coli K12 and Gram-positive bacterium M.luteus NCT C2665. The polypeptide is Ranatuerin-2SEc (Lithobates sevosus (Dusky gopher frog)).